We begin with the raw amino-acid sequence, 224 residues long: RNA-free ribonuclease P (224 aa).

This sequence belongs to the HARP family.

It catalyses the reaction Endonucleolytic cleavage of RNA, removing 5'-extranucleotides from tRNA precursor.. Its function is as follows. RNA-free RNase P that catalyzes the removal of the 5'-leader sequence from pre-tRNA to produce the mature 5'-terminus. The sequence is that of RNA-free ribonuclease P from Haloarcula marismortui (strain ATCC 43049 / DSM 3752 / JCM 8966 / VKM B-1809) (Halobacterium marismortui).